The primary structure comprises 87 residues: MKIFGFFGKRASAPMARERLQVLLAHERASLGKSDLVAILREEIIAVIAKHIQVDSEKVNVKMDRDEKVSTLEIDVEIPLQAGGRAA.

The protein belongs to the MinE family.

Prevents the cell division inhibition by proteins MinC and MinD at internal division sites while permitting inhibition at polar sites. This ensures cell division at the proper site by restricting the formation of a division septum at the midpoint of the long axis of the cell. In Chelativorans sp. (strain BNC1), this protein is Cell division topological specificity factor.